Reading from the N-terminus, the 976-residue chain is Peptidylglycine alpha-amidating monooxygenase (976 aa).

The N-terminal stretch at Met1–Ala25 is a signal peptide. The peptidylglycine alpha-hydroxylating monooxygenase stretch occupies residues Met1–Gly497. A propeptide spanning residues Phe26–Arg35 is cleaved from the precursor. The Intragranular portion of the chain corresponds to Phe36–Gly866. Cystine bridges form between Cys47-Cys186, Cys81-Cys126, Cys114-Cys131, Cys227-Cys334, and Cys293-Cys315. His107 and His108 together coordinate Cu(2+). Residues His172, His242, His244, and Met314 each coordinate Cu(2+). Residues Asp498 to Val820 are peptidyl-alpha-hydroxyglycine alpha-amidating lyase. NHL repeat units follow at residues Val501 to Asp544, Ala570 to His611, Leu620 to Ser665, and Gly673 to Asp717. Val520 lines the Ca(2+) pocket. Arg533 serves as a coordination point for a protein. A Zn(2+)-binding site is contributed by His585. Residue Leu587 coordinates Ca(2+). Cys634 and Cys655 are joined by a disulfide. Tyr654 provides a ligand contact to a protein. His690 contributes to the Zn(2+) binding site. An intrachain disulfide couples Cys702 to Cys713. A protein is bound at residue Arg706. An N-linked (GlcNAc...) asparagine glycan is attached at Asn765. An NHL 5 repeat occupies Gly769–Thr812. Residue Val774 is modified to Sulfotyrosine. His786 contacts Zn(2+). Asp787 is a Ca(2+) binding site. Glu792 carries the sulfotyrosine modification. A helical transmembrane segment spans residues Val867 to Ile890. Residues Arg891 to Ser976 lie on the Cytoplasmic side of the membrane. Phosphoserine is present on residues Ser921, Ser932, and Ser945. The tract at residues Asn928–Ser945 is interaction with RASSF9. Residues Gly940–Ser976 are disordered. A Phosphothreonine modification is found at Thr946. Ser949 carries the post-translational modification Phosphoserine. The segment covering Glu952–Tyr965 has biased composition (acidic residues). The residue at position 959 (Thr959) is a Phosphothreonine. Ser961 is subject to Phosphoserine.

In the C-terminal section; belongs to the peptidyl-alpha-hydroxyglycine alpha-amidating lyase family. The protein in the N-terminal section; belongs to the copper type II ascorbate-dependent monooxygenase family. As to quaternary structure, monomer. Interacts with RASSF9. The cofactor is Zn(2+). Cu(2+) serves as cofactor.

The protein localises to the cytoplasmic vesicle. It is found in the secretory vesicle membrane. Its subcellular location is the membrane. The protein resides in the secreted. It catalyses the reaction a [peptide]-C-terminal glycine + 2 L-ascorbate + O2 = a [peptide]-C-terminal (2S)-2-hydroxyglycine + 2 monodehydro-L-ascorbate radical + H2O. The catalysed reaction is a [peptide]-C-terminal (2S)-2-hydroxyglycine = a [peptide]-C-terminal amide + glyoxylate. It carries out the reaction N-dodecanoylglycine + 2 L-ascorbate + O2 = N-dodecanoyl-(2S)-hydroxyglycine + 2 monodehydro-L-ascorbate radical + H2O. The enzyme catalyses N-dodecanoyl-(2S)-hydroxyglycine = dodecanamide + glyoxylate. It catalyses the reaction N-(9Z,12Z,15Z)-octadecatrienoylglycine + 2 L-ascorbate + O2 = N-(9Z,12Z,15Z)-octadecatrienoyl-(2S)-hydroxyglycine + 2 monodehydro-L-ascorbate radical + H2O. The catalysed reaction is N-(9Z,12Z,15Z)-octadecatrienoyl-(2S)-hydroxyglycine = (9Z,12Z,15Z)-octadecatrienamide + glyoxylate. It carries out the reaction N-(9Z-octadecenoyl)glycine + 2 L-ascorbate + O2 = N-(9Z-octadecenoyl)-(2S)-hydroxyglycine + 2 monodehydro-L-ascorbate radical + H2O. The enzyme catalyses N-(9Z-octadecenoyl)-(2S)-hydroxyglycine = (9Z)-octadecenamide + glyoxylate. It catalyses the reaction N-tetradecanoylglycine + 2 L-ascorbate + O2 = N-tetradecanoyl-(2S)-hydroxyglycine + 2 monodehydro-L-ascorbate radical + H2O. The catalysed reaction is N-tetradecanoyl-(2S)-hydroxyglycine = tetradecamide + glyoxylate. It carries out the reaction N-decanoylglycine + 2 L-ascorbate + O2 = N-decanoyl-(2S)-hydroxyglycine + 2 monodehydro-L-ascorbate radical + H2O. The enzyme catalyses N-decanoyl-(2S)-hydroxyglycine = decanamide + glyoxylate. It catalyses the reaction N-octanoylglycine + 2 L-ascorbate + O2 = N-octanoyl-(2S)-hydroxyglycine + 2 monodehydro-L-ascorbate radical + H2O. The catalysed reaction is N-octanoyl-(2S)-hydroxyglycine = octanamide + glyoxylate. PAM activity is inhibited by EDTA, phenylglyoxal and diethyl pyrocarbonate. PAL activity is stimulated by cadmium and inhibited by mercury. Its function is as follows. Bifunctional enzyme that catalyzes amidation of the C-terminus of proteins. Alpha-amidation is present at the C-terminus of many endocrine hormones and neuropeptides and is required for their activity. C-terminal amidation also takes place in response to protein fragmentation triggered by oxidative stress, promoting degradation of amidated protein fragments by the proteasome. Alpha-amidation involves two sequential reactions, both of which are catalyzed by separate catalytic domains of the enzyme. The first step, catalyzed by peptidyl alpha-hydroxylating monooxygenase (PHM) domain, is the copper-, ascorbate-, and O2- dependent stereospecific hydroxylation (with S stereochemistry) at the alpha-carbon (C-alpha) of the C-terminal glycine of the peptidylglycine substrate. The second step, catalyzed by the peptidylglycine amidoglycolate lyase (PAL) domain, is the zinc-dependent cleavage of the N-C-alpha bond, producing the alpha-amidated peptide and glyoxylate. Similarly, catalyzes the two-step conversion of an N-fatty acylglycine to a primary fatty acid amide and glyoxylate. This is Peptidylglycine alpha-amidating monooxygenase from Rattus norvegicus (Rat).